The primary structure comprises 136 residues: Large ribosomal subunit protein uL16 (136 aa).

The protein belongs to the universal ribosomal protein uL16 family. Part of the 50S ribosomal subunit.

Functionally, binds 23S rRNA and is also seen to make contacts with the A and possibly P site tRNAs. The chain is Large ribosomal subunit protein uL16 from Rickettsia akari (strain Hartford).